An 892-amino-acid chain; its full sequence is Alanine--tRNA ligase (892 aa).

Zn(2+) contacts are provided by His580, His584, Cys682, and His686.

This sequence belongs to the class-II aminoacyl-tRNA synthetase family. Zn(2+) serves as cofactor.

It localises to the cytoplasm. The enzyme catalyses tRNA(Ala) + L-alanine + ATP = L-alanyl-tRNA(Ala) + AMP + diphosphate. In terms of biological role, catalyzes the attachment of alanine to tRNA(Ala) in a two-step reaction: alanine is first activated by ATP to form Ala-AMP and then transferred to the acceptor end of tRNA(Ala). Also edits incorrectly charged Ser-tRNA(Ala) and Gly-tRNA(Ala) via its editing domain. The sequence is that of Alanine--tRNA ligase from Salinispora tropica (strain ATCC BAA-916 / DSM 44818 / JCM 13857 / NBRC 105044 / CNB-440).